A 207-amino-acid chain; its full sequence is Guanylate kinase (207 aa).

One can recognise a Guanylate kinase-like domain in the interval 4 to 184; that stretch reads GTLYIVSAPS…ALSDLKTIIR (181 aa). 11-18 provides a ligand contact to ATP; that stretch reads APSGAGKS.

Belongs to the guanylate kinase family.

Its subcellular location is the cytoplasm. The enzyme catalyses GMP + ATP = GDP + ADP. Essential for recycling GMP and indirectly, cGMP. This chain is Guanylate kinase (gmk), found in Salmonella typhimurium (strain LT2 / SGSC1412 / ATCC 700720).